A 227-amino-acid chain; its full sequence is Acyl-protein thioesterase 1 (227 aa).

Active-site charge relay system residues include serine 119, aspartate 173, and histidine 207.

The protein belongs to the AB hydrolase superfamily. AB hydrolase 2 family.

The protein resides in the cytoplasm. The protein localises to the nucleus. It catalyses the reaction S-hexadecanoyl-L-cysteinyl-[protein] + H2O = L-cysteinyl-[protein] + hexadecanoate + H(+). Functionally, hydrolyzes fatty acids from S-acylated cysteine residues in proteins with a strong preference for palmitoylated G-alpha proteins over other acyl substrates. Mediates the deacylation of G-alpha proteins such as GPA1 in vivo, but has weak or no activity toward palmitoylated Ras proteins. Has weak lysophospholipase activity in vitro; however such activity may not exist in vivo. The chain is Acyl-protein thioesterase 1 from Saccharomyces cerevisiae (strain ATCC 204508 / S288c) (Baker's yeast).